The following is a 565-amino-acid chain: Deoxyribodipyrimidine photo-lyase, mitochondrial (565 aa).

Residues 75–226 (STVMHWFRND…QLKYYHDSCI (152 aa)) enclose the Photolyase/cryptochrome alpha/beta domain. Residues Y326 and 338-342 (TSGLS) contribute to the FAD site. Interaction with DNA stretches follow at residues 384–391 (EVAWRDFY) and 451–452 (NR). 482-484 (DGD) provides a ligand contact to FAD. Q514 lines the DNA pocket.

It belongs to the DNA photolyase class-1 family. Monomer. The cofactor is FAD. It depends on (6R)-5,10-methylene-5,6,7,8-tetrahydrofolate as a cofactor.

It localises to the nucleus. The protein resides in the mitochondrion. It catalyses the reaction cyclobutadipyrimidine (in DNA) = 2 pyrimidine residues (in DNA).. Involved in repair of UV radiation-induced DNA damage. Catalyzes the light-dependent monomerization (300-600 nm) of cyclobutyl pyrimidine dimers (in cis-syn configuration), which are formed between adjacent bases on the same DNA strand upon exposure to ultraviolet radiation. This Saccharomyces cerevisiae (strain ATCC 204508 / S288c) (Baker's yeast) protein is Deoxyribodipyrimidine photo-lyase, mitochondrial (PHR1).